The primary structure comprises 257 residues: Zinc import ATP-binding protein ZnuC (257 aa).

The ABC transporter domain occupies 6 to 221 (IRLEQVGVSF…PAFVELFGQN (216 aa)). Position 38 to 45 (38 to 45 (GPNGAGKT)) interacts with ATP.

Belongs to the ABC transporter superfamily. Zinc importer (TC 3.A.1.15.5) family. The complex is composed of two ATP-binding proteins (ZnuC), two transmembrane proteins (ZnuB) and a solute-binding protein (ZnuA).

Its subcellular location is the cell inner membrane. The enzyme catalyses Zn(2+)(out) + ATP(in) + H2O(in) = Zn(2+)(in) + ADP(in) + phosphate(in) + H(+)(in). In terms of biological role, part of the ABC transporter complex ZnuABC involved in zinc import. Responsible for energy coupling to the transport system. This chain is Zinc import ATP-binding protein ZnuC, found in Pseudomonas entomophila (strain L48).